A 116-amino-acid chain; its full sequence is Protein Rev (116 aa).

Serine 5 carries the post-translational modification Phosphoserine; by host CK2. A homomultimerization region spans residues 18 to 26 (IIKILYQSN). The tract at residues 26 to 48 (NPYSKPNGSRQARRNRRRRWRAR) is disordered. The short motif at 34–50 (SRQARRNRRRRWRARQN) is the Nuclear localization signal and RNA-binding (RRE) element. Residues 36-47 (QARRNRRRRWRA) show a composition bias toward basic residues. The Nuclear export signal and binding to XPO1 motif lies at 73–84 (LQLPPIERLRLD). At serine 92 the chain carries Phosphoserine; by host.

Belongs to the HIV-1 REV protein family. Homomultimer; when bound to the RRE. Multimeric assembly is essential for activity and may involve XPO1. Binds to human KPNB1, XPO1, TNPO1, RANBP5 and IPO7. Interacts with the viral Integrase. Interacts with human KHDRBS1. Interacts with human NAP1; this interaction decreases Rev multimerization and stimulates its activity. Interacts with human DEAD-box helicases DDX3 and DDX24; these interactions may serve for viral RNA export to the cytoplasm and packaging, respectively. Interacts with human PSIP1; this interaction may inhibit HIV-1 DNA integration by promoting dissociation of the Integrase-LEDGF/p75 complex. Post-translationally, asymmetrically arginine dimethylated at one site by host PRMT6. Methylation impairs the RNA-binding activity and export of viral RNA from the nucleus to the cytoplasm. In terms of processing, phosphorylated by protein kinase CK2. Presence of, and maybe binding to the N-terminus of the regulatory beta subunit of CK2 is necessary for CK2-mediated Rev's phosphorylation.

The protein resides in the host nucleus. It localises to the host nucleolus. The protein localises to the host cytoplasm. In terms of biological role, escorts unspliced or incompletely spliced viral pre-mRNAs (late transcripts) out of the nucleus of infected cells. These pre-mRNAs carry a recognition sequence called Rev responsive element (RRE) located in the env gene, that is not present in fully spliced viral mRNAs (early transcripts). This function is essential since most viral proteins are translated from unspliced or partially spliced pre-mRNAs which cannot exit the nucleus by the pathway used by fully processed cellular mRNAs. Rev itself is translated from a fully spliced mRNA that readily exits the nucleus. Rev's nuclear localization signal (NLS) binds directly to KPNB1/Importin beta-1 without previous binding to KPNA1/Importin alpha-1. KPNB1 binds to the GDP bound form of RAN (Ran-GDP) and targets Rev to the nucleus. In the nucleus, the conversion from Ran-GDP to Ran-GTP dissociates Rev from KPNB1 and allows Rev's binding to the RRE in viral pre-mRNAs. Rev multimerization on the RRE via cooperative assembly exposes its nuclear export signal (NES) to the surface. Rev can then form a complex with XPO1/CRM1 and Ran-GTP, leading to nuclear export of the complex. Conversion from Ran-GTP to Ran-GDP mediates dissociation of the Rev/RRE/XPO1/RAN complex, so that Rev can return to the nucleus for a subsequent round of export. Beside KPNB1, also seems to interact with TNPO1/Transportin-1, RANBP5/IPO5 and IPO7/RANBP7 for nuclear import. The nucleoporin-like HRB/RIP is an essential cofactor that probably indirectly interacts with Rev to release HIV RNAs from the perinuclear region to the cytoplasm. This Homo sapiens (Human) protein is Protein Rev.